Consider the following 374-residue polypeptide: Heme A synthase (374 aa).

Helical transmembrane passes span 22 to 42 (VAVWLLVCAGMVFAMAIIGAI), 107 to 127 (LWGRLIGVVFLLPFVWFWVRG), 135 to 155 (PTLAGLFLLGGLQGFIGWFMV), 172 to 192 (LHLGMAFLIYAALLKVALGLL), 209 to 229 (AWAALALLGVTIVWGAFVAGI), 265 to 285 (AAVQFVHRWLAVVTALVVLSL), 306 to 326 (AAATVAQVGLGIATLLSVVWI), and 327 to 347 (PLATAHQGGALVLTGLLVWTL). Heme is bound at residue His271. His332 lines the heme pocket.

This sequence belongs to the COX15/CtaA family. Type 2 subfamily. Interacts with CtaB. The cofactor is heme b.

The protein resides in the cell membrane. It carries out the reaction Fe(II)-heme o + 2 A + H2O = Fe(II)-heme a + 2 AH2. The protein operates within porphyrin-containing compound metabolism; heme A biosynthesis; heme A from heme O: step 1/1. Its function is as follows. Catalyzes the conversion of heme O to heme A by two successive hydroxylations of the methyl group at C8. The first hydroxylation forms heme I, the second hydroxylation results in an unstable dihydroxymethyl group, which spontaneously dehydrates, resulting in the formyl group of heme A. This chain is Heme A synthase, found in Rhodospirillum centenum (strain ATCC 51521 / SW).